Reading from the N-terminus, the 287-residue chain is Proteasome assembly chaperone 1 (287 aa).

The tract at residues 1 to 32 (MATFFGEVQSVFSRAVDEDDEEEEGEEEEEDR) is disordered. The segment covering 17-32 (DEDDEEEEGEEEEEDR) has biased composition (acidic residues).

Belongs to the PSMG1 family. Forms a heterodimer with psmg2. In terms of processing, degraded by the proteasome upon completion of 20S proteasome maturation.

Its subcellular location is the cytoplasm. The protein resides in the endoplasmic reticulum. In terms of biological role, chaperone protein which promotes assembly of the 20S proteasome as part of a heterodimer with psmg2. The protein is Proteasome assembly chaperone 1 of Xenopus tropicalis (Western clawed frog).